Reading from the N-terminus, the 156-residue chain is Small ribosomal subunit protein uS7 (156 aa).

The protein belongs to the universal ribosomal protein uS7 family. In terms of assembly, part of the 30S ribosomal subunit. Contacts proteins S9 and S11.

In terms of biological role, one of the primary rRNA binding proteins, it binds directly to 16S rRNA where it nucleates assembly of the head domain of the 30S subunit. Is located at the subunit interface close to the decoding center, probably blocks exit of the E-site tRNA. The protein is Small ribosomal subunit protein uS7 of Limosilactobacillus fermentum (strain NBRC 3956 / LMG 18251) (Lactobacillus fermentum).